Consider the following 100-residue polypeptide: Nucleoid-associated protein RoseRS_1534 (100 aa).

Belongs to the YbaB/EbfC family. As to quaternary structure, homodimer.

Its subcellular location is the cytoplasm. It localises to the nucleoid. Its function is as follows. Binds to DNA and alters its conformation. May be involved in regulation of gene expression, nucleoid organization and DNA protection. In Roseiflexus sp. (strain RS-1), this protein is Nucleoid-associated protein RoseRS_1534.